The chain runs to 138 residues: Putative pre-16S rRNA nuclease (138 aa).

It belongs to the YqgF nuclease family.

It is found in the cytoplasm. Functionally, could be a nuclease involved in processing of the 5'-end of pre-16S rRNA. The protein is Putative pre-16S rRNA nuclease of Listeria monocytogenes serotype 4b (strain CLIP80459).